Here is a 218-residue protein sequence, read N- to C-terminus: Ras-related protein RABA1h (218 aa).

20-27 (GDSGVGKS) provides a ligand contact to GTP. Residues 42 to 50 (SRSTIGVEF) carry the Effector region motif. GTP contacts are provided by residues 68–72 (DTAGQ), 126–129 (NKAD), and 156–157 (SA). S-geranylgeranyl cysteine attachment occurs at residues Cys-215 and Cys-216.

Belongs to the small GTPase superfamily. Rab family.

Its subcellular location is the cell membrane. Intracellular vesicle trafficking and protein transport. This chain is Ras-related protein RABA1h (RABA1H), found in Arabidopsis thaliana (Mouse-ear cress).